Consider the following 558-residue polypeptide: Phosphatase and actin regulator 3 (558 aa).

Residues 1-11 (MAASEDGSSCL) show a composition bias toward polar residues. 3 disordered regions span residues 1–69 (MAAS…KLAT), 81–288 (KKKN…RPLP), and 300–366 (LATK…ENLM). Positions 18 to 33 (QSDPSFLSDSSATSTD) are enriched in low complexity. At T69 the chain carries Phosphothreonine. The stretch at 92 to 117 (SALEKKMAGRQGREELIKQGLLEMME) is one RPEL 1 repeat. Residues 94–108 (LEKKMAGRQGREELI) show a composition bias toward basic and acidic residues. A compositionally biased stretch (polar residues) spans 144-169 (ETLTSEGAQPGSPSASGTDQVSQDEL). Positions 228-239 (PSPPLLPTPPPK) are enriched in pro residues. S229 carries the phosphoserine modification. A Phosphothreonine modification is found at T235. Basic and acidic residues-rich tracts occupy residues 300–341 (LATK…RDEA) and 354–363 (ATKDSEENKE). RPEL repeat units lie at residues 400 to 425 (ELLA…PRRT), 438 to 463 (MKLS…KQRN), and 476 to 501 (QRLT…IRFS). The stretch at 449–485 (AVEELERRNILKQRNDQTEQEERREIKQRLTRKLNQR) forms a coiled coil.

This sequence belongs to the phosphatase and actin regulator family. As to quaternary structure, binds PPP1CA and actin; thus inhibiting the protein phosphatase 1 (PP1) activity.

The protein resides in the nucleus matrix. The protein is Phosphatase and actin regulator 3 (Phactr3) of Mus musculus (Mouse).